We begin with the raw amino-acid sequence, 69 residues long: Large ribosomal subunit protein uL29 (69 aa).

Belongs to the universal ribosomal protein uL29 family.

The sequence is that of Large ribosomal subunit protein uL29 from Rhodospirillum centenum (strain ATCC 51521 / SW).